The primary structure comprises 422 residues: Isocitrate dehydrogenase [NADP] (422 aa).

T94 lines the NADP(+) pocket. The D-threo-isocitrate site is built by S103, N105, R109, R119, and R143. D310 provides a ligand contact to Mg(2+). NADP(+)-binding positions include 344–350 (HGTAPKY), N357, Y396, and R400.

Belongs to the isocitrate and isopropylmalate dehydrogenases family. As to quaternary structure, homodimer. Mg(2+) is required as a cofactor. Mn(2+) serves as cofactor.

The enzyme catalyses D-threo-isocitrate + NADP(+) = 2-oxoglutarate + CO2 + NADPH. Catalyzes the oxidative decarboxylation of isocitrate to 2-oxoglutarate and carbon dioxide with the concomitant reduction of NADP(+). This chain is Isocitrate dehydrogenase [NADP] (icd), found in Staphylococcus aureus (strain MSSA476).